The following is a 423-amino-acid chain: Probable sucrose-phosphatase 3b (423 aa).

It belongs to the sucrose phosphatase family. In terms of assembly, homodimer. It depends on Mg(2+) as a cofactor.

The catalysed reaction is sucrose 6(F)-phosphate + H2O = sucrose + phosphate. It functions in the pathway glycan biosynthesis; sucrose biosynthesis; sucrose from D-fructose 6-phosphate and UDP-alpha-D-glucose: step 2/2. Catalyzes the final step of sucrose synthesis. The chain is Probable sucrose-phosphatase 3b (SPP3B) from Arabidopsis thaliana (Mouse-ear cress).